Consider the following 859-residue polypeptide: Leucine--tRNA ligase (859 aa).

The 'HIGH' region signature appears at 42 to 52; the sequence is PYPSGRLHMGH. The 'KMSKS' region signature appears at 618 to 622; it reads KMSKS. K621 lines the ATP pocket.

It belongs to the class-I aminoacyl-tRNA synthetase family.

The protein localises to the cytoplasm. The catalysed reaction is tRNA(Leu) + L-leucine + ATP = L-leucyl-tRNA(Leu) + AMP + diphosphate. The chain is Leucine--tRNA ligase from Shewanella baltica (strain OS195).